Consider the following 137-residue polypeptide: Protein Turandot X (137 aa).

The N-terminal stretch at 1–24 (MKVPVFQLSCLLCLIVCLLCSVKA) is a signal peptide.

The protein belongs to the Turandot family.

It localises to the secreted. A humoral factor that may play a role in stress tolerance. The chain is Protein Turandot X from Drosophila persimilis (Fruit fly).